A 213-amino-acid polypeptide reads, in one-letter code: Probable GTP-binding protein EngB (213 aa).

In terms of domain architecture, EngB-type G spans 30–204 (EGFEVAFAGR…YTALAGWMEL (175 aa)). GTP-binding positions include 38–45 (GRSNAGKS), 64–68 (GRTQL), 82–85 (DLPG), 149–152 (TKAD), and 182–185 (LFSA). Mg(2+)-binding residues include serine 45 and threonine 66.

The protein belongs to the TRAFAC class TrmE-Era-EngA-EngB-Septin-like GTPase superfamily. EngB GTPase family. It depends on Mg(2+) as a cofactor.

Necessary for normal cell division and for the maintenance of normal septation. In Pseudomonas fluorescens (strain SBW25), this protein is Probable GTP-binding protein EngB.